The chain runs to 205 residues: Keratin-associated protein 4-6 (205 aa).

Tandem repeats lie at residues 20 to 24 (CCRPS), 25 to 29 (CCQTT), 30 to 34 (CCRTT), 35 to 39 (CCRPS), 40 to 44 (CCVSS), 45 to 49 (CCRPQ), 50 to 54 (CCQSV), 55 to 59 (CCQPT), 60 to 64 (CCRPS), 65 to 68 (CCPS), 69 to 73 (CCQTT), 74 to 78 (CCRTT), 79 to 83 (CCRPS), 84 to 88 (CCVSS), 89 to 93 (CCRPQ), 94 to 98 (CCQSV), 99 to 103 (CCQPT), 104 to 108 (CCRPS), 114 to 118 (CCRPS), 119 to 123 (CCVSR), 124 to 128 (CCRSQ), 129 to 133 (CCQSV), 134 to 138 (CCQPT), 139 to 143 (CCRPS), 144 to 148 (CCISS), 149 to 153 (CCRPS), 154 to 158 (CCESS), 159 to 163 (CCRPC), 164 to 168 (CCRPC), and 169 to 173 (CCLRP). Positions 20 to 173 (CCRPSCCQTT…CCRPCCCLRP (154 aa)) are 30 X 5 AA repeats of C-C-[IRQVEL]-[SPTR]-[STVQRCP].

This sequence belongs to the KRTAP type 4 family. In terms of assembly, interacts with hair keratins. As to expression, expressed in the hair follicles.

In the hair cortex, hair keratin intermediate filaments are embedded in an interfilamentous matrix, consisting of hair keratin-associated proteins (KRTAP), which are essential for the formation of a rigid and resistant hair shaft through their extensive disulfide bond cross-linking with abundant cysteine residues of hair keratins. The matrix proteins include the high-sulfur and high-glycine-tyrosine keratins. The polypeptide is Keratin-associated protein 4-6 (KRTAP4-6) (Homo sapiens (Human)).